Consider the following 616-residue polypeptide: METVDTSQRLARLRELMKERNVDVYLVPSEDSHQSEYIAPCDGRREFISGFSGSAGCAIVSMTKAALSTDGRYFNQASKQLDNNWLLLKRGIESMPTWQEWTAEQLEGGKVVGVDPSLITASDARSLSETIKRSGGSLLGVQENLVDLVWGKDRPCRPSEKVTVHPVEFAGKSFEEKITDLRKELEKKKSAGFVVSMLDEVAWLFNLRGNDIPYNPVFFSYAIITPSTADLYIDEEKLSADVKKHLGDKVSLKPYTSIFEDAKALGQSAQAEVNGGASDPPRKFFISTKASWSLSLALGGANKVEEVRSPISDAKAIKNDTELEGMRACHIRDGAALTKYFAWLENELVNKKTVLNEVEASDKLEEIRSKQKNFVGLSFDTISSSGPNAAVVHYKAERNNCSIIDPEAVYLCDSGAQYLDGTTDTTRTLHFGEPTEKERKAYTLVLKGMIAIDTAIFPKGTTGFSLDTLARQFLWKEGLDYLHGTGHGVGSYLNVHEGPIGIGTRVQYSETPLSVGNVISDEPGYYEDGKFGIRIENIIMAREVKTTFSFGERPWLGFEHVTMTPLCRKLTDPSLLNDAEKKWINEYHSEVWEKTSGYFAEDELTRNWLKRETQPI.

Residues D413, D424, E522, and E536 each coordinate Mn(2+).

The protein belongs to the peptidase M24B family. Mn(2+) is required as a cofactor.

The enzyme catalyses Release of any N-terminal amino acid, including proline, that is linked to proline, even from a dipeptide or tripeptide.. Its function is as follows. Catalyzes the removal of a penultimate prolyl residue from the N-termini of peptides. The sequence is that of Probable Xaa-Pro aminopeptidase P (AMPP) from Paracoccidioides brasiliensis (strain Pb18).